The chain runs to 520 residues: Bifunctional purine biosynthesis protein PurH (520 aa).

Positions 1–150 constitute an MGS-like domain; the sequence is MSDDRKAIKR…KNHPSVAVVV (150 aa).

This sequence belongs to the PurH family.

It carries out the reaction (6R)-10-formyltetrahydrofolate + 5-amino-1-(5-phospho-beta-D-ribosyl)imidazole-4-carboxamide = 5-formamido-1-(5-phospho-D-ribosyl)imidazole-4-carboxamide + (6S)-5,6,7,8-tetrahydrofolate. The catalysed reaction is IMP + H2O = 5-formamido-1-(5-phospho-D-ribosyl)imidazole-4-carboxamide. It functions in the pathway purine metabolism; IMP biosynthesis via de novo pathway; 5-formamido-1-(5-phospho-D-ribosyl)imidazole-4-carboxamide from 5-amino-1-(5-phospho-D-ribosyl)imidazole-4-carboxamide (10-formyl THF route): step 1/1. The protein operates within purine metabolism; IMP biosynthesis via de novo pathway; IMP from 5-formamido-1-(5-phospho-D-ribosyl)imidazole-4-carboxamide: step 1/1. The polypeptide is Bifunctional purine biosynthesis protein PurH (Corynebacterium glutamicum (strain R)).